Consider the following 308-residue polypeptide: tRNA pseudouridine synthase B (308 aa).

The active-site Nucleophile is the aspartate 47.

It belongs to the pseudouridine synthase TruB family. Type 1 subfamily.

It carries out the reaction uridine(55) in tRNA = pseudouridine(55) in tRNA. In terms of biological role, responsible for synthesis of pseudouridine from uracil-55 in the psi GC loop of transfer RNAs. This is tRNA pseudouridine synthase B from Xanthomonas euvesicatoria pv. vesicatoria (strain 85-10) (Xanthomonas campestris pv. vesicatoria).